Consider the following 466-residue polypeptide: 55 kDa erythrocyte membrane protein (466 aa).

Thr-2 carries the N-acetylthreonine modification. Ser-19 carries the phosphoserine modification. Phosphothreonine is present on Thr-49. A phosphoserine mark is found at Ser-57 and Ser-110. A PDZ domain is found at 71-152; the sequence is LIQFEKVTEE…MISLKVIPNQ (82 aa). In terms of domain architecture, SH3 spans 158–228; the sequence is ALQMFMRAQF…PSPELQEWRV (71 aa). Ser-243 carries the post-translational modification Phosphoserine. Positions 268–466 are interaction with PALS1; it reads VVSYEEVVRL…PQWVPVSWVY (199 aa). A Guanylate kinase-like domain is found at 282–451; it reads RKTLVLIGAS…TLKTLQETFD (170 aa).

Belongs to the MAGUK family. In terms of assembly, heterodimer with PALS1. Interacts with DLG5 and NF2. Interacts (via guanylate kinase-like domain) with WHRN (via third PDZ domain). Interacts with PALS1. Palmitoylated.

The protein localises to the cell membrane. It is found in the cell projection. It localises to the stereocilium. Functionally, essential regulator of neutrophil polarity. Regulates neutrophil polarization by regulating AKT1 phosphorylation through a mechanism that is independent of PIK3CG activity. In Bos taurus (Bovine), this protein is 55 kDa erythrocyte membrane protein (MPP1).